The chain runs to 392 residues: Selenide, water dikinase 1 (392 aa).

The active site involves cysteine 31. ATP contacts are provided by residues lysine 32, 67-69, aspartate 87, aspartate 110, and 161-164; these read GMD and GGQT. Aspartate 69 serves as a coordination point for Mg(2+). Aspartate 110 contacts Mg(2+). Position 265 (aspartate 265) interacts with Mg(2+).

The protein belongs to the selenophosphate synthase 1 family. Class II subfamily. As to quaternary structure, homodimer. Mg(2+) is required as a cofactor.

Its subcellular location is the cell membrane. It is found in the nucleus membrane. The catalysed reaction is hydrogenselenide + ATP + H2O = selenophosphate + AMP + phosphate + 2 H(+). Its function is as follows. Synthesizes selenophosphate from selenide and ATP. The sequence is that of Selenide, water dikinase 1 (sephs1) from Xenopus tropicalis (Western clawed frog).